A 501-amino-acid polypeptide reads, in one-letter code: Ribose import ATP-binding protein RbsA (501 aa).

2 consecutive ABC transporter domains span residues 5–241 (LQLK…VGRK) and 252–495 (APGD…VGKL). Residue 37–44 (GENGAGKS) coordinates ATP.

This sequence belongs to the ABC transporter superfamily. Ribose importer (TC 3.A.1.2.1) family. The complex is composed of an ATP-binding protein (RbsA), two transmembrane proteins (RbsC) and a solute-binding protein (RbsB).

It is found in the cell inner membrane. It carries out the reaction D-ribose(out) + ATP + H2O = D-ribose(in) + ADP + phosphate + H(+). Its function is as follows. Part of the ABC transporter complex RbsABC involved in ribose import. Responsible for energy coupling to the transport system. The polypeptide is Ribose import ATP-binding protein RbsA (Escherichia coli (strain UTI89 / UPEC)).